We begin with the raw amino-acid sequence, 718 residues long: Neutral ceramidase B (718 aa).

The signal sequence occupies residues 1 to 20 (MINSFKKLIILISLVIILLS). Residues Asn224 and Asn252 are each glycosylated (N-linked (GlcNAc...) asparagine). Ser298 functions as the Nucleophile in the catalytic mechanism. Residues Asn358, Asn378, Asn391, Asn421, Asn422, Asn577, Asn610, and Asn614 are each glycosylated (N-linked (GlcNAc...) asparagine).

This sequence belongs to the neutral ceramidase family.

It localises to the secreted. The enzyme catalyses an N-acylsphing-4-enine + H2O = sphing-4-enine + a fatty acid. Hydrolyzes the sphingolipid ceramide into sphingosine and free fatty acid. This is Neutral ceramidase B (dcd2B) from Dictyostelium discoideum (Social amoeba).